Here is an 88-residue protein sequence, read N- to C-terminus: Alkene monooxygenase system, oxygenase component subunit gamma (88 aa).

The protein belongs to the TmoB/XamoB family. In terms of assembly, the alkene monooxygenase multicomponent enzyme system is composed of an electron transfer component and a monooxygenase component interacting with the effector protein XamoD. The electron transfer component is composed of a ferredoxin reductase (XamoF) and a ferredoxin (XamoC), and the monooxygenase component is formed by a heterohexamer (dimer of heterotrimers) of two alpha subunits (XamoA), two beta subunits (XamoE) and two gamma subunits (XamoB).

It is found in the cytoplasm. The enzyme catalyses propene + NADH + O2 + H(+) = 1,2-epoxypropane + NAD(+) + H2O. Its activity is regulated as follows. Inhibited by propyne. Its function is as follows. Component of the alkene monooxygenase multicomponent enzyme system which catalyzes the O2- and NADH-dependent epoxidation of short chain (C2 to C6) alkenes to their corresponding epoxides. Also able to catalyze the oxidation of a number of chlorinated alkenes, including trichloroethylene, cis- and trans-1,2-dichloroethylene, vinyl chloride, 1-chloropropylene, 1,3-dichloropropylene and 2,3-dichloropropylene. This Xanthobacter autotrophicus (strain ATCC BAA-1158 / Py2) protein is Alkene monooxygenase system, oxygenase component subunit gamma.